We begin with the raw amino-acid sequence, 337 residues long: Tetraacyldisaccharide 4'-kinase (337 aa).

ATP is bound at residue 51 to 58; sequence HVGGAGKT.

The protein belongs to the LpxK family.

The catalysed reaction is a lipid A disaccharide + ATP = a lipid IVA + ADP + H(+). Its pathway is glycolipid biosynthesis; lipid IV(A) biosynthesis; lipid IV(A) from (3R)-3-hydroxytetradecanoyl-[acyl-carrier-protein] and UDP-N-acetyl-alpha-D-glucosamine: step 6/6. Functionally, transfers the gamma-phosphate of ATP to the 4'-position of a tetraacyldisaccharide 1-phosphate intermediate (termed DS-1-P) to form tetraacyldisaccharide 1,4'-bis-phosphate (lipid IVA). The protein is Tetraacyldisaccharide 4'-kinase of Afipia carboxidovorans (strain ATCC 49405 / DSM 1227 / KCTC 32145 / OM5) (Oligotropha carboxidovorans).